Consider the following 279-residue polypeptide: DegV domain-containing protein SAR1438 (279 aa).

The DegV domain occupies 4-278; the sequence is QIIVTDSTSD…QGAIGLVVLK (275 aa). Hexadecanoate is bound by residues Thr-61 and Ser-93.

Its function is as follows. May bind long-chain fatty acids, such as palmitate, and may play a role in lipid transport or fatty acid metabolism. The chain is DegV domain-containing protein SAR1438 from Staphylococcus aureus (strain MRSA252).